The primary structure comprises 160 residues: 6,7-dimethyl-8-ribityllumazine synthase (160 aa).

Residues Trp27, 59–61 (AIE), and 81–83 (VVI) contribute to the 5-amino-6-(D-ribitylamino)uracil site. Residue 86 to 87 (QT) coordinates (2S)-2-hydroxy-3-oxobutyl phosphate. The Proton donor role is filled by His89. Residue Asn114 participates in 5-amino-6-(D-ribitylamino)uracil binding. Arg128 serves as a coordination point for (2S)-2-hydroxy-3-oxobutyl phosphate.

This sequence belongs to the DMRL synthase family. In terms of assembly, homopentamer.

It catalyses the reaction (2S)-2-hydroxy-3-oxobutyl phosphate + 5-amino-6-(D-ribitylamino)uracil = 6,7-dimethyl-8-(1-D-ribityl)lumazine + phosphate + 2 H2O + H(+). It functions in the pathway cofactor biosynthesis; riboflavin biosynthesis; riboflavin from 2-hydroxy-3-oxobutyl phosphate and 5-amino-6-(D-ribitylamino)uracil: step 1/2. Its function is as follows. Catalyzes the formation of 6,7-dimethyl-8-ribityllumazine by condensation of 5-amino-6-(D-ribitylamino)uracil with 3,4-dihydroxy-2-butanone 4-phosphate. This is the penultimate step in the biosynthesis of riboflavin. The chain is 6,7-dimethyl-8-ribityllumazine synthase (ribH) from Mycobacterium tuberculosis (strain CDC 1551 / Oshkosh).